The following is a 432-amino-acid chain: Glutamyl-tRNA reductase (432 aa).

Substrate contacts are provided by residues 49 to 52 (TCNR), Ser-101, 106 to 108 (ESQ), and Gln-112. The active-site Nucleophile is Cys-50. 181-186 (GTGETI) contributes to the NADP(+) binding site. Positions 410 to 432 (KPGYHHPTLQTTIVKTDETDPAS) are disordered.

This sequence belongs to the glutamyl-tRNA reductase family. In terms of assembly, homodimer.

The catalysed reaction is (S)-4-amino-5-oxopentanoate + tRNA(Glu) + NADP(+) = L-glutamyl-tRNA(Glu) + NADPH + H(+). It participates in porphyrin-containing compound metabolism; protoporphyrin-IX biosynthesis; 5-aminolevulinate from L-glutamyl-tRNA(Glu): step 1/2. Its function is as follows. Catalyzes the NADPH-dependent reduction of glutamyl-tRNA(Glu) to glutamate 1-semialdehyde (GSA). The polypeptide is Glutamyl-tRNA reductase (Xylella fastidiosa (strain 9a5c)).